A 401-amino-acid polypeptide reads, in one-letter code: Dual-specificity RNA methyltransferase RlmN (401 aa).

The active-site Proton acceptor is Glu-114. Residues 120–365 (DKTRGTLCVS…TMVRRTRGDD (246 aa)) enclose the Radical SAM core domain. Residues Cys-127 and Cys-370 are joined by a disulfide bond. Positions 134, 138, and 141 each coordinate [4Fe-4S] cluster. S-adenosyl-L-methionine-binding positions include 187–188 (GE), Ser-219, 241–243 (SLH), and Asn-327. Cys-370 acts as the S-methylcysteine intermediate in catalysis.

The protein belongs to the radical SAM superfamily. RlmN family. It depends on [4Fe-4S] cluster as a cofactor.

Its subcellular location is the cytoplasm. The enzyme catalyses adenosine(2503) in 23S rRNA + 2 reduced [2Fe-2S]-[ferredoxin] + 2 S-adenosyl-L-methionine = 2-methyladenosine(2503) in 23S rRNA + 5'-deoxyadenosine + L-methionine + 2 oxidized [2Fe-2S]-[ferredoxin] + S-adenosyl-L-homocysteine. The catalysed reaction is adenosine(37) in tRNA + 2 reduced [2Fe-2S]-[ferredoxin] + 2 S-adenosyl-L-methionine = 2-methyladenosine(37) in tRNA + 5'-deoxyadenosine + L-methionine + 2 oxidized [2Fe-2S]-[ferredoxin] + S-adenosyl-L-homocysteine. In terms of biological role, specifically methylates position 2 of adenine 2503 in 23S rRNA and position 2 of adenine 37 in tRNAs. m2A2503 modification seems to play a crucial role in the proofreading step occurring at the peptidyl transferase center and thus would serve to optimize ribosomal fidelity. The sequence is that of Dual-specificity RNA methyltransferase RlmN from Stenotrophomonas maltophilia (strain R551-3).